Here is a 297-residue protein sequence, read N- to C-terminus: uncharacterized protein (297 aa).

7 WD repeats span residues 12-51 (KAKE…CIHE), 54-93 (GHGH…VDRR), 96-135 (GHLA…FSPI), 140-177 (DAKD…LSSD), 179-217 (FSHP…ILKS), 222-261 (KNME…QITS), and 265-297 (VGTP…YQYN).

The protein belongs to the WD repeat MORG1 family.

It is found in the cytoplasm. It localises to the nucleus. This is an uncharacterized protein from Schizosaccharomyces pombe (strain 972 / ATCC 24843) (Fission yeast).